The primary structure comprises 618 residues: Leucine aminopeptidase 2 (618 aa).

A peptide contacts are provided by residues 140-142 (QCQ) and 272-277 (PYGGME). His301 contacts Zn(2+). Catalysis depends on Glu302, which acts as the Proton acceptor. Zn(2+)-binding residues include His305 and Glu324. Catalysis depends on Tyr389, which acts as the Proton donor.

Belongs to the peptidase M1 family. The cofactor is Zn(2+).

The protein localises to the cytoplasm. It localises to the nucleus. It catalyses the reaction an epoxide + H2O = an ethanediol. In terms of biological role, aminopeptidase that preferentially cleaves di- and tripeptides. Also has low epoxide hydrolase activity (in vitro). Can hydrolyze the epoxide leukotriene LTA(4) but it forms preferentially 5,6-dihydroxy-7,9,11,14-eicosatetraenoic acid rather than the cytokine leukotriene B(4) as the product compared to the homologous mammalian enzyme (in vitro). The polypeptide is Leucine aminopeptidase 2 (Emericella nidulans (strain FGSC A4 / ATCC 38163 / CBS 112.46 / NRRL 194 / M139) (Aspergillus nidulans)).